We begin with the raw amino-acid sequence, 273 residues long: Proteasome subunit beta type-10 (273 aa).

N-acetylmethionine is present on Met-1. Positions 1-39 (MLKPALEPRGGFSFENCQRNASLERVLPGLKVPHARKTG) are cleaved as a propeptide — removed in mature form. Thr-40 serves as the catalytic Nucleophile. Ser-230 is subject to Phosphoserine.

It belongs to the peptidase T1B family. As to quaternary structure, the 26S proteasome consists of a 20S proteasome core and two 19S regulatory subunits. The 20S proteasome core is composed of 28 subunits that are arranged in four stacked rings, resulting in a barrel-shaped structure. The two end rings are each formed by seven alpha subunits, and the two central rings are each formed by seven beta subunits. The catalytic chamber with the active sites is on the inside of the barrel. Component of the immunoproteasome, where it displaces the equivalent housekeeping subunit PSMB7. Component of the spermatoproteasome, a form of the proteasome specifically found in testis. (Microbial infection) Interacts with HIV-1 TAT protein. Post-translationally, autocleaved. The resulting N-terminal Thr residue of the mature subunit is responsible for the nucleophile proteolytic activity.

It localises to the cytoplasm. Its subcellular location is the nucleus. The catalysed reaction is Cleavage of peptide bonds with very broad specificity.. Its function is as follows. The proteasome is a multicatalytic proteinase complex which is characterized by its ability to cleave peptides with Arg, Phe, Tyr, Leu, and Glu adjacent to the leaving group at neutral or slightly basic pH. The proteasome has an ATP-dependent proteolytic activity. This subunit is involved in antigen processing to generate class I binding peptides. The sequence is that of Proteasome subunit beta type-10 (PSMB10) from Homo sapiens (Human).